The following is a 274-amino-acid chain: 2,3,4,5-tetrahydropyridine-2,6-dicarboxylate N-succinyltransferase (274 aa).

This sequence belongs to the transferase hexapeptide repeat family.

Its subcellular location is the cytoplasm. The catalysed reaction is (S)-2,3,4,5-tetrahydrodipicolinate + succinyl-CoA + H2O = (S)-2-succinylamino-6-oxoheptanedioate + CoA. It functions in the pathway amino-acid biosynthesis; L-lysine biosynthesis via DAP pathway; LL-2,6-diaminopimelate from (S)-tetrahydrodipicolinate (succinylase route): step 1/3. This Escherichia fergusonii (strain ATCC 35469 / DSM 13698 / CCUG 18766 / IAM 14443 / JCM 21226 / LMG 7866 / NBRC 102419 / NCTC 12128 / CDC 0568-73) protein is 2,3,4,5-tetrahydropyridine-2,6-dicarboxylate N-succinyltransferase.